The primary structure comprises 763 residues: Exo-1,4-beta-xylosidase bxlB (763 aa).

The signal sequence occupies residues 1–23 (MAVFKSWNLALLSSLFIPALCQS). The N-linked (GlcNAc...) asparagine glycan is linked to N63. D288 is an active-site residue. N-linked (GlcNAc...) asparagine glycans are attached at residues N340, N408, N419, N458, N621, and N760.

This sequence belongs to the glycosyl hydrolase 3 family.

Its subcellular location is the secreted. It catalyses the reaction Hydrolysis of (1-&gt;4)-beta-D-xylans, to remove successive D-xylose residues from the non-reducing termini.. Its pathway is glycan degradation; xylan degradation. Xylan 1,4-beta-xylosidase involved in the hydrolysis of xylan, a major structural heterogeneous polysaccharide found in plant biomass representing the second most abundant polysaccharide in the biosphere, after cellulose. Active against rye arabinoxylan and xylohexaose, but not paranitrophenyl-beta-xyloside. In Emericella nidulans (strain FGSC A4 / ATCC 38163 / CBS 112.46 / NRRL 194 / M139) (Aspergillus nidulans), this protein is Exo-1,4-beta-xylosidase bxlB (bxlB).